Reading from the N-terminus, the 224-residue chain is Ribose-5-phosphate isomerase A (224 aa).

Substrate-binding positions include 26-29 (TGST), 82-85 (DGAD), and 95-98 (KGGG). E104 (proton acceptor) is an active-site residue. K122 is a substrate binding site.

Belongs to the ribose 5-phosphate isomerase family. Homodimer.

It carries out the reaction aldehydo-D-ribose 5-phosphate = D-ribulose 5-phosphate. Its pathway is carbohydrate degradation; pentose phosphate pathway; D-ribose 5-phosphate from D-ribulose 5-phosphate (non-oxidative stage): step 1/1. In terms of biological role, catalyzes the reversible conversion of ribose-5-phosphate to ribulose 5-phosphate. This chain is Ribose-5-phosphate isomerase A, found in Lactococcus lactis subsp. cremoris (strain SK11).